The primary structure comprises 130 residues: Small ribosomal subunit protein uS8 (130 aa).

The protein belongs to the universal ribosomal protein uS8 family. In terms of assembly, part of the 30S ribosomal subunit. Contacts proteins S5 and S12.

In terms of biological role, one of the primary rRNA binding proteins, it binds directly to 16S rRNA central domain where it helps coordinate assembly of the platform of the 30S subunit. This chain is Small ribosomal subunit protein uS8, found in Vibrio atlanticus (strain LGP32) (Vibrio splendidus (strain Mel32)).